The chain runs to 1073 residues: MVGMEWDTGARGLTGRPLPWSMVEGILSGREVGTPRPVLHEAEPECLSTPRPGPGSTEVPGERRGSRQGERSGEIPFVELHATSSYNFLAGASDPGEMVDRAHELGLSALALVDRDGLYGAVRFAEAAAEVGLATVFGAELSLREGVLTVLCRGVEGYRRLSHLITGAAMSAGEKGSVDYPLLPQVAEQGAGHWVVLAGVEWQKKIDHLIECFGRDNVVLEFPARMLPEDTDHHDILRSIQTRTGLRGILSTMPTAATRDHVRLAGAKCALALRANLAEAESSLHPMGGTWLRSGGALARAYPQCGDLLATTVEIASGCAFTFDLVAPELPRWDTPDGHTEMTWLTHLVESRFDRRYRSRPAEVRERARAQIRHELGVIEQLGFPGYFLIVDDLVQFCHNATILCQGRGSAANSAVCFVLGITNAEPITAGLLFERFLSRDRDGPPDIDIDIESGRREEVIQYVYTRYGRDNAAQVANVITYRTKGALRDAARALGYPQGTVDAWSRGASEPPADVVELAGQLKGQPRHLGIHSGGMVICDRPIADVVPTEWARMEGRSVVQWDKDDCAAAGLVKFDLLGLGMLEALHHMMDLVAHHRGITVNLWELDLADAGVYDMLCRADAVGVFQVESRAQMSTLPRLKPRTFFDLVVEVALIRPGPIQGGSVHPYLRRRSGEEAVTYDHPVLEKSLGKTLGIPLFQEQIMQIAVDAAGFTGGEADALRRAMGSKRSPTRMAALRSRFYQGLADTHGIIGDTADKLWNKMVAFAAYGFPESHSQSFATLVYFSAWFKHHYPAEFCAGLLRAQPMGFYSPQSLIADARRHGVEILPISINESGVQADAPDGHLRLGLDLVKGLGEEAARRIAEHAPYTSIPDLSRRADLGVAHIEALARAGALDCLGVGRREALWQAGIAATERPGMLPGISAIEAPALPGMSAFELMATSIAATGVTHDAQPMALLRAHLDALGVVPADRLLTDVADGTRVRIAGVVTHRQRPQTASGVTFLGLEDETGLMNVMVSPGLWDRQRVLARTAKTLIIRGIVQNATGAVNVVADKLEPLPVGEWLSRGSRDFR.

Positions 41-73 are disordered; the sequence is EAEPECLSTPRPGPGSTEVPGERRGSRQGERSG. The span at 60 to 73 shows a compositional bias: basic and acidic residues; it reads PGERRGSRQGERSG.

This sequence belongs to the DNA polymerase type-C family. DnaE2 subfamily.

The protein localises to the cytoplasm. The catalysed reaction is DNA(n) + a 2'-deoxyribonucleoside 5'-triphosphate = DNA(n+1) + diphosphate. DNA polymerase involved in damage-induced mutagenesis and translesion synthesis (TLS). It is not the major replicative DNA polymerase. This is Error-prone DNA polymerase from Corynebacterium efficiens (strain DSM 44549 / YS-314 / AJ 12310 / JCM 11189 / NBRC 100395).